Reading from the N-terminus, the 3589-residue chain is D-lysergyl-peptide-synthetase subunit 1 (3589 aa).

The segment at 344–742 (NCHSRPDSLA…IGRKDLQVKV (399 aa)) is adenylation (A) domain 1. The 70-residue stretch at 883–952 (VERRLQLLFA…KLRDLAAASS (70 aa)) folds into the Carrier 1 domain. O-(pantetheine 4'-phosphoryl)serine is present on serine 915. A condensation (C) domain 1 region spans residues 995 to 1380 (EDIYPCTSLQ…SQFQHILTQI (386 aa)). The segment at 1424 to 1826 (QAKAQMQPEA…RRKDSQVKLR (403 aa)) is adenylation (A) domain 2. Residues 1974 to 2042 (LERELQKIWA…TIEKLAAAAV (69 aa)) enclose the Carrier 2 domain. At serine 2006 the chain carries O-(pantetheine 4'-phosphoryl)serine. The condensation (C) domain 2 stretch occupies residues 2087 to 2509 (VEDIYPCSPI…IEMLDEEHRS (423 aa)). The segment at 2534–2929 (CLESPESPAI…GRKDDQVKIR (396 aa)) is adenylation (A) domain 3. One can recognise a Carrier 3 domain in the interval 3064–3132 (LETRLQELVG…RLSELAVVLN (69 aa)). Position 3096 is an O-(pantetheine 4'-phosphoryl)serine (serine 3096). The interval 3187–3585 (TNFIALHFSQ…TYPESLVSEL (399 aa)) is cyclization (Cyc) domain.

It belongs to the NRP synthetase family.

Its pathway is alkaloid biosynthesis; ergot alkaloid biosynthesis. In terms of biological role, D-lysergyl-peptide-synthetase subunit 1; part of the gene cluster that mediates the biosynthesis of fungal ergot alkaloid ergovaline, the predominant ergopeptine product in E.festucae var. lolii. DmaW catalyzes the first step of ergot alkaloid biosynthesis by condensing dimethylallyl diphosphate (DMAP) and tryptophan to form 4-dimethylallyl-L-tryptophan. The second step is catalyzed by the methyltransferase easF that methylates 4-dimethylallyl-L-tryptophan in the presence of S-adenosyl-L-methionine, resulting in the formation of 4-dimethylallyl-L-abrine. The catalase easC and the FAD-dependent oxidoreductase easE then transform 4-dimethylallyl-L-abrine to chanoclavine-I which is further oxidized by easD in the presence of NAD(+), resulting in the formation of chanoclavine-I aldehyde. Agroclavine dehydrogenase easG then mediates the conversion of chanoclavine-I aldehyde to agroclavine via a non-enzymatic adduct reaction: the substrate is an iminium intermediate that is formed spontaneously from chanoclavine-I aldehyde in the presence of glutathione. The presence of easA is not required to complete this reaction. Further conversion of agroclavine to paspalic acid is a two-step process involving oxidation of agroclavine to elymoclavine and of elymoclavine to paspalic acid, the second step being performed by the elymoclavine oxidase cloA. Paspalic acid is then further converted to D-lysergic acid. Ergovaline is assembled from D-lysergic acid and three different amino acids by the D-lysergyl-peptide-synthetase composed of a monomudular (lpsB) and a trimodular (lpsA) nonribosomal peptide synthetase subunit. The sequence is that of D-lysergyl-peptide-synthetase subunit 1 from Epichloe festucae var. lolii (Neotyphodium lolii).